We begin with the raw amino-acid sequence, 254 residues long: Triosephosphate isomerase (254 aa).

12-14 (NWK) contributes to the substrate binding site. The active-site Electrophile is the H99. E169 acts as the Proton acceptor in catalysis. Residues G175, S214, and 235-236 (GG) each bind substrate.

The protein belongs to the triosephosphate isomerase family. As to quaternary structure, homodimer.

It localises to the cytoplasm. It catalyses the reaction D-glyceraldehyde 3-phosphate = dihydroxyacetone phosphate. The protein operates within carbohydrate biosynthesis; gluconeogenesis. It functions in the pathway carbohydrate degradation; glycolysis; D-glyceraldehyde 3-phosphate from glycerone phosphate: step 1/1. Functionally, involved in the gluconeogenesis. Catalyzes stereospecifically the conversion of dihydroxyacetone phosphate (DHAP) to D-glyceraldehyde-3-phosphate (G3P). This is Triosephosphate isomerase from Chelativorans sp. (strain BNC1).